The chain runs to 441 residues: Trigger factor (441 aa).

One can recognise a PPIase FKBP-type domain in the interval 161–246 (GDKVTIDFLG…VHEVLGEKLP (86 aa)).

Belongs to the FKBP-type PPIase family. Tig subfamily.

The protein localises to the cytoplasm. It catalyses the reaction [protein]-peptidylproline (omega=180) = [protein]-peptidylproline (omega=0). Its function is as follows. Involved in protein export. Acts as a chaperone by maintaining the newly synthesized protein in an open conformation. Functions as a peptidyl-prolyl cis-trans isomerase. The sequence is that of Trigger factor from Teredinibacter turnerae (strain ATCC 39867 / T7901).